Consider the following 239-residue polypeptide: MLRYIFFAAILFFVFPNTESAGFLKFELTADRDCLLHLEHSSTYSETVRLLAYESRPLEIYTQGSINEIPVHFQLLHHFSGKALSEAKFQIFQLKNNGLWDSKVIDTDKVILSVRSTFYCENGYFGPICDRRSRTFAPKSDIQTSTPGYQTQVLKFDFKISDDIIIYSSLAFFVLLLIIFNCILCCYRPKKSQKYLDVSLGSPKVFSICGYSADKSGNTTEYLDAPSRFFSSTKIECVV.

In terms of tissue distribution, expressed in mesendodermal precursor cells of embryos.

Its function is as follows. May have a role in mesendoderm development during embryogenesis. The protein is Skn-1 dependent zygotic transcript 1 protein (sdz-1) of Caenorhabditis elegans.